Here is a 474-residue protein sequence, read N- to C-terminus: Ribulose bisphosphate carboxylase large chain (474 aa).

Substrate contacts are provided by N122 and T172. Catalysis depends on K174, which acts as the Proton acceptor. K176 contacts substrate. Mg(2+) contacts are provided by K200, D202, and E203. K200 bears the N6-carboxylysine mark. Catalysis depends on H293, which acts as the Proton acceptor. The substrate site is built by R294, H326, and S378.

The protein belongs to the RuBisCO large chain family. Type I subfamily. In terms of assembly, heterohexadecamer of 8 large chains and 8 small chains; disulfide-linked. The disulfide link is formed within the large subunit homodimers. Requires Mg(2+) as cofactor. Post-translationally, the disulfide bond which can form in the large chain dimeric partners within the hexadecamer appears to be associated with oxidative stress and protein turnover.

It localises to the carboxysome. The enzyme catalyses 2 (2R)-3-phosphoglycerate + 2 H(+) = D-ribulose 1,5-bisphosphate + CO2 + H2O. The catalysed reaction is D-ribulose 1,5-bisphosphate + O2 = 2-phosphoglycolate + (2R)-3-phosphoglycerate + 2 H(+). Functionally, ruBisCO catalyzes two reactions: the carboxylation of D-ribulose 1,5-bisphosphate, the primary event in carbon dioxide fixation, as well as the oxidative fragmentation of the pentose substrate in the photorespiration process. Both reactions occur simultaneously and in competition at the same active site. This Synechococcus sp. (strain JA-3-3Ab) (Cyanobacteria bacterium Yellowstone A-Prime) protein is Ribulose bisphosphate carboxylase large chain.